A 93-amino-acid chain; its full sequence is uncharacterized protein (93 aa).

Helical transmembrane passes span methionine 15 to valine 35, isoleucine 48 to isoleucine 68, and leucine 72 to histidine 92.

It localises to the cell membrane. This is an uncharacterized protein from Bacillus subtilis (strain 168).